The primary structure comprises 606 residues: Zinc finger protein 214 (606 aa).

One can recognise a KRAB domain in the interval 3–83 (VTFEDVTIIF…GAQMYENQNY (81 aa)). The C2H2-type 1; degenerate zinc finger occupies 275 to 297 (YGCDEVDGNFHQSSGVHFHQRVH). A C2H2-type 2 zinc finger spans residues 303–325 (YSCNACGKSFSQISSLHNHQRVH). Residues 330 to 352 (FYKIECDKDLSRNSLLHIHQRLH) form a C2H2-type 3; degenerate zinc finger. 8 consecutive C2H2-type zinc fingers follow at residues 358 to 380 (FKCN…QRVH), 386 to 408 (YKCD…QLVH), 414 to 436 (YKCE…QRVH), 442 to 464 (YKCD…QRVH), 470 to 492 (YTCP…QRVH), 498 to 520 (YKCE…QRVH), 526 to 548 (YKCH…QRVH), and 554 to 576 (YQCA…QRVH).

It belongs to the krueppel C2H2-type zinc-finger protein family.

The protein resides in the nucleus. May be involved in transcriptional regulation. The polypeptide is Zinc finger protein 214 (ZNF214) (Homo sapiens (Human)).